Here is a 352-residue protein sequence, read N- to C-terminus: Fe(3+) ions import ATP-binding protein FbpC (352 aa).

Residues leucine 5–isoleucine 239 enclose the ABC transporter domain. Glycine 37 to threonine 44 serves as a coordination point for ATP.

Belongs to the ABC transporter superfamily. Fe(3+) ion importer (TC 3.A.1.10) family. The complex is composed of two ATP-binding proteins (FbpC), two transmembrane proteins (FbpB) and a solute-binding protein (FbpA).

Its subcellular location is the cell inner membrane. The enzyme catalyses Fe(3+)(out) + ATP + H2O = Fe(3+)(in) + ADP + phosphate + H(+). In terms of biological role, part of the ABC transporter complex FbpABC involved in Fe(3+) ions import. Responsible for energy coupling to the transport system. This chain is Fe(3+) ions import ATP-binding protein FbpC, found in Neisseria gonorrhoeae (strain ATCC 700825 / FA 1090).